Reading from the N-terminus, the 421-residue chain is Myb-related protein Pp2 (421 aa).

HTH myb-type domains lie at 9–61 and 62–116; these read KVGL…TNYL and RPDL…KKRL. 2 DNA-binding regions (H-T-H motif) span residues 37 to 61 and 89 to 112; these read WRAI…TNYL and WSRI…NTRL. The disordered stretch occupies residues 119–240; it reads QGLDPNTHLP…VTTKSHEDHR (122 aa). The segment covering 136 to 147 has biased composition (acidic residues); that stretch reads DTEDDTDDEGGD.

It is found in the nucleus. Its function is as follows. Possible transcription activator. This chain is Myb-related protein Pp2 (PP2), found in Physcomitrium patens (Spreading-leaved earth moss).